The chain runs to 361 residues: Phospho-N-acetylmuramoyl-pentapeptide-transferase (361 aa).

A run of 10 helical transmembrane segments spans residues 26–46, 73–93, 98–118, 139–159, 168–188, 200–220, 237–257, 264–284, 289–309, and 339–359; these read SILA…VLIQ, TMGG…WGDL, VWLV…DDWI, IFGL…AAVT, IALP…IVGF, GLAI…AYAS, AGDL…FLWF, VFMG…IAVI, LVLV…IIQV, and VIVR…ATLK.

It belongs to the glycosyltransferase 4 family. MraY subfamily. It depends on Mg(2+) as a cofactor.

It is found in the cell inner membrane. It carries out the reaction UDP-N-acetyl-alpha-D-muramoyl-L-alanyl-gamma-D-glutamyl-meso-2,6-diaminopimeloyl-D-alanyl-D-alanine + di-trans,octa-cis-undecaprenyl phosphate = di-trans,octa-cis-undecaprenyl diphospho-N-acetyl-alpha-D-muramoyl-L-alanyl-D-glutamyl-meso-2,6-diaminopimeloyl-D-alanyl-D-alanine + UMP. It participates in cell wall biogenesis; peptidoglycan biosynthesis. Its function is as follows. Catalyzes the initial step of the lipid cycle reactions in the biosynthesis of the cell wall peptidoglycan: transfers peptidoglycan precursor phospho-MurNAc-pentapeptide from UDP-MurNAc-pentapeptide onto the lipid carrier undecaprenyl phosphate, yielding undecaprenyl-pyrophosphoryl-MurNAc-pentapeptide, known as lipid I. The sequence is that of Phospho-N-acetylmuramoyl-pentapeptide-transferase from Xylella fastidiosa (strain 9a5c).